Consider the following 233-residue polypeptide: Octanoyltransferase (233 aa).

The BPL/LPL catalytic domain occupies 36 to 211 (DTTPDEIWLV…EFTRQLGYPT (176 aa)). Substrate is bound by residues 75-82 (RGGQITYH), 142-144 (SLG), and 155-157 (GLA). Catalysis depends on Cys-173, which acts as the Acyl-thioester intermediate.

The protein belongs to the LipB family.

It localises to the cytoplasm. The enzyme catalyses octanoyl-[ACP] + L-lysyl-[protein] = N(6)-octanoyl-L-lysyl-[protein] + holo-[ACP] + H(+). It participates in protein modification; protein lipoylation via endogenous pathway; protein N(6)-(lipoyl)lysine from octanoyl-[acyl-carrier-protein]: step 1/2. In terms of biological role, catalyzes the transfer of endogenously produced octanoic acid from octanoyl-acyl-carrier-protein onto the lipoyl domains of lipoate-dependent enzymes. Lipoyl-ACP can also act as a substrate although octanoyl-ACP is likely to be the physiological substrate. The sequence is that of Octanoyltransferase from Yersinia pseudotuberculosis serotype O:1b (strain IP 31758).